Consider the following 355-residue polypeptide: 3-isopropylmalate dehydrogenase (355 aa).

Positions 90, 100, 128, and 222 each coordinate substrate. Mg(2+) contacts are provided by D222, D246, and D250. Residue 280-292 (GSAPDIAGKGIAN) participates in NAD(+) binding.

The protein belongs to the isocitrate and isopropylmalate dehydrogenases family. LeuB type 1 subfamily. In terms of assembly, homodimer. It depends on Mg(2+) as a cofactor. Requires Mn(2+) as cofactor.

It localises to the cytoplasm. It catalyses the reaction (2R,3S)-3-isopropylmalate + NAD(+) = 4-methyl-2-oxopentanoate + CO2 + NADH. Its pathway is amino-acid biosynthesis; L-leucine biosynthesis; L-leucine from 3-methyl-2-oxobutanoate: step 3/4. Its function is as follows. Catalyzes the oxidation of 3-carboxy-2-hydroxy-4-methylpentanoate (3-isopropylmalate) to 3-carboxy-4-methyl-2-oxopentanoate. The product decarboxylates to 4-methyl-2 oxopentanoate. The chain is 3-isopropylmalate dehydrogenase from Burkholderia mallei (strain ATCC 23344).